A 520-amino-acid chain; its full sequence is Intermediate filament protein ON3 (520 aa).

Residues 1–27 show a composition bias toward low complexity; the sequence is MSYTKKTSYSVKSSSSGSVPRSFSSMS. Residues 1–33 are disordered; it reads MSYTKKTSYSVKSSSSGSVPRSFSSMSYSGPSV. Positions 1–108 are head; it reads MSYTKKTSYS…DPNIQVVRTQ (108 aa). A coil 1A region spans residues 109–144; it reads EKEQMKSLNNRFASFIDKVRFLEQQNKMLETKWSLL. In terms of domain architecture, IF rod spans 109-420; sequence EKEQMKSLNN…KLLEGEEDRL (312 aa). A linker 1 region spans residues 145–157; it reads QNQTATRSNIDAM. The tract at residues 158 to 253 is coil 1B; that stretch reads FEAYINNLRR…QIFEEEIREL (96 aa). Positions 254-273 are linker 12; the sequence is QSQIKDTSVVVEMDNSRNLD. A coil 2 region spans residues 274-420; the sequence is MDAIVAEVRA…KLLEGEEDRL (147 aa). The segment at 421 to 520 is tail; the sequence is LSGIKSVNIS…VSESSEVVQD (100 aa).

The protein belongs to the intermediate filament family.

Functionally, one of the non-neuronal predominant intermediate filament proteins of the visual pathway. The protein is Intermediate filament protein ON3 of Carassius auratus (Goldfish).